We begin with the raw amino-acid sequence, 444 residues long: Ribosomal protein uS12 methylthiotransferase RimO (444 aa).

Residues Ile3–Glu119 form the MTTase N-terminal domain. Residues Cys12, Cys48, Cys82, Cys156, Cys160, and Cys163 each coordinate [4Fe-4S] cluster. Positions Ala142–Gln372 constitute a Radical SAM core domain. In terms of domain architecture, TRAM spans Leu375–Leu444.

Belongs to the methylthiotransferase family. RimO subfamily. Requires [4Fe-4S] cluster as cofactor.

It localises to the cytoplasm. The catalysed reaction is L-aspartate(89)-[ribosomal protein uS12]-hydrogen + (sulfur carrier)-SH + AH2 + 2 S-adenosyl-L-methionine = 3-methylsulfanyl-L-aspartate(89)-[ribosomal protein uS12]-hydrogen + (sulfur carrier)-H + 5'-deoxyadenosine + L-methionine + A + S-adenosyl-L-homocysteine + 2 H(+). Catalyzes the methylthiolation of an aspartic acid residue of ribosomal protein uS12. The sequence is that of Ribosomal protein uS12 methylthiotransferase RimO from Pelotomaculum thermopropionicum (strain DSM 13744 / JCM 10971 / SI).